A 233-amino-acid polypeptide reads, in one-letter code: NAD(P)H-hydrate epimerase (233 aa).

The region spanning 10-217 (AINVDLELFN…ALQRKYELNL (208 aa)) is the YjeF N-terminal domain. 60–64 (NNGGD) is a (6S)-NADPHX binding site. The K(+) site is built by Asn61 and Asp125. Residues 129 to 135 (GFSFKPP) and Asp158 each bind (6S)-NADPHX. A K(+)-binding site is contributed by Ser161.

This sequence belongs to the NnrE/AIBP family. The cofactor is K(+).

The catalysed reaction is (6R)-NADHX = (6S)-NADHX. The enzyme catalyses (6R)-NADPHX = (6S)-NADPHX. In terms of biological role, catalyzes the epimerization of the S- and R-forms of NAD(P)HX, a damaged form of NAD(P)H that is a result of enzymatic or heat-dependent hydration. This is a prerequisite for the S-specific NAD(P)H-hydrate dehydratase to allow the repair of both epimers of NAD(P)HX. The protein is NAD(P)H-hydrate epimerase of Drosophila grimshawi (Hawaiian fruit fly).